We begin with the raw amino-acid sequence, 347 residues long: GMP reductase (347 aa).

108–131 (ADFQKTKDIMALTDDLIFICIDIA) lines the NADP(+) pocket. The K(+) site is built by G181 and G183. Catalysis depends on C186, which acts as the Thioimidate intermediate. 216-239 (IIGDGGCSCAGDVSKAFGGGADFV) lines the NADP(+) pocket.

The protein belongs to the IMPDH/GMPR family. GuaC type 1 subfamily. As to quaternary structure, homotetramer.

It carries out the reaction IMP + NH4(+) + NADP(+) = GMP + NADPH + 2 H(+). Catalyzes the irreversible NADPH-dependent deamination of GMP to IMP. It functions in the conversion of nucleobase, nucleoside and nucleotide derivatives of G to A nucleotides, and in maintaining the intracellular balance of A and G nucleotides. This chain is GMP reductase, found in Aliivibrio fischeri (strain MJ11) (Vibrio fischeri).